The sequence spans 449 residues: BPI fold-containing family B member 6 (449 aa).

An N-terminal signal peptide occupies residues 1 to 18 (MLCSLSLVLCGLLAGTRA). N115 carries N-linked (GlcNAc...) asparagine glycosylation. A disulfide bridge links C138 with C172.

The protein belongs to the BPI/LBP/Plunc superfamily. BPI/LBP family.

It localises to the secreted. In Mus musculus (Mouse), this protein is BPI fold-containing family B member 6 (Bpifb6).